The following is a 60-amino-acid chain: Large ribosomal subunit protein bL32 (60 aa).

The span at 1–20 (MACPKKKTSKSKRSMRRAAW) shows a compositional bias: basic residues. The disordered stretch occupies residues 1–22 (MACPKKKTSKSKRSMRRAAWKR).

The protein belongs to the bacterial ribosomal protein bL32 family.

In Thermosynechococcus vestitus (strain NIES-2133 / IAM M-273 / BP-1), this protein is Large ribosomal subunit protein bL32.